The chain runs to 607 residues: All-trans-retinol 13,14-reductase (607 aa).

Positions 1–22 (MWFAVVAIFLALVAFLYRYVVG) are cleaved as a signal peptide.

This sequence belongs to the carotenoid/retinoid oxidoreductase family. CrtISO subfamily. The cofactor is NAD(+). It depends on NADP(+) as a cofactor. Requires FAD as cofactor.

It is found in the endoplasmic reticulum membrane. The catalysed reaction is all-trans-13,14-dihydroretinol + A = all-trans-retinol + AH2. Catalyzes the saturation of all-trans-retinol to all-trans-13,14-dihydroretinol. In addition, saturates the 7-8 double bond of all-trans-retinol to produce all-trans-7,8-dihydroretinol. Can also use vitamin A2 (all-trans-3,4-didehydroretinol) as a substrate, to produce all-trans-13,14-dihydro-3,4-didehydroretinol or all-trans-7,8-dihydro-3,4-didehydroretinol. May play a role in vitamin A metabolism. In Danio rerio (Zebrafish), this protein is All-trans-retinol 13,14-reductase.